A 545-amino-acid polypeptide reads, in one-letter code: Tripartite motif-containing protein 55 (545 aa).

The RING-type zinc-finger motif lies at 26–82 (CPICLEMFTKPVVILPCQHNLCRKCASDIFQASNPYLPTRGGTTVASGGRFRCPSCR). The B box-type zinc finger occupies 119 to 161 (LDQPMCEEHEEERINIYCLNCEVPTCSLCKVFGAHKDCQVAPL). Cys-124, His-127, Cys-147, and His-153 together coordinate Zn(2+). The stretch at 219 to 258 (YSILEERKTEMTQAITRTQEEKLEHVRTLIRKYSDHLENV) forms a coiled coil. Residues 269–327 (MDEPEMAVFLQNAKTLLQKITEASKAFQMEKIEQGYEIMNNFTVNLNREEKIIREIDFS) enclose the COS domain. 2 disordered regions span residues 324 to 378 (IDFS…SELA) and 406 to 528 (LVTQ…GADS). Residues 328–355 (REEEDEDDEGEVDEEGEGEDAVEVEEAE) are compositionally biased toward acidic residues. Low complexity-rich tracts occupy residues 417–426 (SQQTTQSETS) and 469–493 (SAAE…AAVS). The segment covering 495–506 (KESSSTAATSQI) has biased composition (polar residues). Residues 510–520 (ASSPQGQAAAL) show a composition bias toward low complexity.

In terms of assembly, homooligomer and heterooligomer. Interacts with titin/TTN. Interacts with myosins. Interacts with SQSTM1 and NBR1. Probably interacts with TRIM63 and TRIM54. Targeted for degradation through the proteasomal and lysosomal pathways in the presence of SUMO3.

The protein localises to the nucleus. It is found in the cytoplasm. It catalyses the reaction S-ubiquitinyl-[E2 ubiquitin-conjugating enzyme]-L-cysteine + [acceptor protein]-L-lysine = [E2 ubiquitin-conjugating enzyme]-L-cysteine + N(6)-ubiquitinyl-[acceptor protein]-L-lysine.. In terms of biological role, E3 ubiquitin ligase that plays an important role in regulating cardiac development and contractility, muscle growth, metabolism, and fiber-type differentiation. Acts as a critical factor that regulates cardiomyocyte size during development in concert with TRIM63 by regulating E2F1-mediated gene expression. Plays a role in apoptosis induction in cardiomyocytes by promoting ubiquitination of the DUSP1 phosphatase. Promotes non-canonical NF-kappa-B signaling and B-cell-mediated immune responses by mediating NFKB2 'Lys-48'-linked ubiquitination and processing. In turn, NFKB2 is further processed by valosin-containing protein/VCP, an ATPase that mediates ubiquitin-dependent protein degradation by the proteasome. May play a role in preventing macrophages from producing inflammatory factors and migrating by downregulating the level of nuclear NF-kappa-B subunit RELA. Also modifies PPARG via polyubiquitination and accelerates PPARG proteasomal degradation to inhibit its activity. In Rattus norvegicus (Rat), this protein is Tripartite motif-containing protein 55 (Trim55).